Consider the following 131-residue polypeptide: MLIGVGTDIVQIPRIEKILHLYPELFAKKILTSQELKQFVLLGKIHHAAFLAKRFAAKEAVSKAFGVGIGQGINFKDITILNNDLGKPIVEVSSNYTNKLSPFNIHLSLADDYPVCVAFAVIESSYNVILG.

Mg(2+) contacts are provided by D8 and E59.

This sequence belongs to the P-Pant transferase superfamily. AcpS family. Mg(2+) serves as cofactor.

Its subcellular location is the cytoplasm. It catalyses the reaction apo-[ACP] + CoA = holo-[ACP] + adenosine 3',5'-bisphosphate + H(+). In terms of biological role, transfers the 4'-phosphopantetheine moiety from coenzyme A to a Ser of acyl-carrier-protein. The sequence is that of Holo-[acyl-carrier-protein] synthase from Rickettsia massiliae (strain Mtu5).